A 310-amino-acid polypeptide reads, in one-letter code: Small ribosomal subunit protein uS2 (310 aa).

Disordered stretches follow at residues 213–240 and 271–310; these read EEQAALARQQEEANAGTTAGFSEWGGAA and WDSVAPGATDDWGAEPAAPSSDWGTAVTMQEQAKPSTDWA. Residues 216-227 show a composition bias toward low complexity; sequence AALARQQEEANA. Residues 297 to 310 show a composition bias toward polar residues; sequence VTMQEQAKPSTDWA.

The protein belongs to the universal ribosomal protein uS2 family. In terms of assembly, component of the small ribosomal subunit. Mature ribosomes consist of a small (40S) and a large (60S) subunit. The 40S subunit contains about 33 different proteins and 1 molecule of RNA (18S). The 60S subunit contains about 49 different proteins and 3 molecules of RNA (28S, 5.8S and 5S). Interacts with ribosomal protein S21.

Its subcellular location is the cytoplasm. Its function is as follows. Required for the assembly and/or stability of the 40S ribosomal subunit. Required for the processing of the 20S rRNA-precursor to mature 18S rRNA in a late step of the maturation of 40S ribosomal subunits. The sequence is that of Small ribosomal subunit protein uS2 from Nematostella vectensis (Starlet sea anemone).